The primary structure comprises 280 residues: Probable ketoamine kinase lp_1983 (280 aa).

Residue 87-89 participates in ATP binding; it reads DWL. The Proton acceptor role is filled by D189.

The protein belongs to the fructosamine kinase family.

The catalysed reaction is N(6)-(D-ribulosyl)-L-lysine + ATP = N(6)-(3-O-phospho-D-ribulosyl)-L-lysine + ADP + H(+). It catalyses the reaction N-(D-ribulosyl)-cadaverine + ATP = N-(3-O-phospho-D-ribulosyl)-cadaverine + ADP + H(+). The enzyme catalyses N(6)-(D-erythrulosyl)-L-lysine + ATP = N(6)-(3-O-phospho-D-erythrulosyl)-L-lysine + ADP + H(+). It carries out the reaction N-(D-erythrulosyl)-cadaverine + ATP = N-(3-O-phospho-D-erythrulosyl)-cadaverine + ADP + H(+). The catalysed reaction is N(6)-D-ribulosyl-L-lysyl-[protein] + ATP = N(6)-(3-O-phospho-D-ribulosyl)-L-lysyl-[protein] + ADP + H(+). It catalyses the reaction N(6)-(D-erythrulosyl)-L-lysyl-[protein] + ATP = N(6)-(3-O-phospho-D-erythrulosyl)-L-lysyl-[protein] + ADP + H(+). Its function is as follows. Ketoamine kinase that phosphorylates ketoamines, such as erythruloselysine, erythrulosecadaverine, ribuloselysine and ribulosecadaverine, on the third carbon of the sugar moiety to generate ketoamine 3-phosphate. Has higher activity on free lysine (erythruloselysine and ribuloselysine), than on ribuloselysine and erythruloselysine residues on glycated proteins. In Lactiplantibacillus plantarum (strain ATCC BAA-793 / NCIMB 8826 / WCFS1) (Lactobacillus plantarum), this protein is Probable ketoamine kinase lp_1983.